A 372-amino-acid chain; its full sequence is MHC class I-like protein MILL2 (372 aa).

The first 26 residues, 1-26 (MEASSGTAGPAVLLLILALLLTESQG), serve as a signal peptide directing secretion. The tract at residues 28–119 (RSQGTHTLRY…MINQKGHDKG (92 aa)) is alpha-1. 3 disulfide bridges follow: Cys-78-Cys-89, Cys-129-Cys-191, and Cys-230-Cys-287. Positions 120-210 (PYTLQATLDC…SLSNVLPDTG (91 aa)) are alpha-2. N-linked (GlcNAc...) asparagine glycosylation is found at Asn-134, Asn-234, and Asn-293. An Ig-like C1-type domain is found at 192–302 (PARLQRHLAS…NRTIMQTAVS (111 aa)). The interval 211-339 (SPVVIVTCRN…VVDGGLVTGN (129 aa)) is alpha-3. The segment at 308-349 (WPSASWATRQEAEGPHRTHNDHVVDGGLVTGNANKDSPDASS) is disordered. Residues 317–331 (QEAEGPHRTHNDHVV) are compositionally biased toward basic and acidic residues. The tract at residues 340 to 348 (ANKDSPDAS) is connecting peptide. The GPI-anchor amidated serine moiety is linked to residue Ser-349. The propeptide at 350–372 (CATASAISAFPVVVLSVALPRAN) is removed in mature form.

The protein belongs to the MHC class I family. In terms of assembly, heterodimer with B2M. In terms of tissue distribution, ubiquitously expressed in neonatal and adult tissues.

It localises to the cell membrane. Binds to heparan sulfate proteoglycans on the surface of fibroblast cells. The sequence is that of MHC class I-like protein MILL2 from Rattus norvegicus (Rat).